Here is a 193-residue protein sequence, read N- to C-terminus: Pyridoxal 5'-phosphate synthase subunit PdxT (193 aa).

An L-glutamine-binding site is contributed by G48 to S50. The Nucleophile role is filled by C80. L-glutamine is bound by residues R109 and I137–R138. Residues H173 and E175 each act as charge relay system in the active site.

The protein belongs to the glutaminase PdxT/SNO family. In terms of assembly, in the presence of PdxS, forms a dodecamer of heterodimers. Only shows activity in the heterodimer.

The enzyme catalyses aldehydo-D-ribose 5-phosphate + D-glyceraldehyde 3-phosphate + L-glutamine = pyridoxal 5'-phosphate + L-glutamate + phosphate + 3 H2O + H(+). It carries out the reaction L-glutamine + H2O = L-glutamate + NH4(+). The protein operates within cofactor biosynthesis; pyridoxal 5'-phosphate biosynthesis. Functionally, catalyzes the hydrolysis of glutamine to glutamate and ammonia as part of the biosynthesis of pyridoxal 5'-phosphate. The resulting ammonia molecule is channeled to the active site of PdxS. The polypeptide is Pyridoxal 5'-phosphate synthase subunit PdxT (Mycobacteroides abscessus (strain ATCC 19977 / DSM 44196 / CCUG 20993 / CIP 104536 / JCM 13569 / NCTC 13031 / TMC 1543 / L948) (Mycobacterium abscessus)).